The following is a 555-amino-acid chain: Urocanate hydratase (555 aa).

NAD(+) contacts are provided by residues 51-52, Q129, 175-177, E195, 262-266, 272-273, and Y321; these read GG, GMG, QTSAH, and YL. C409 is an active-site residue. G491 is a binding site for NAD(+).

The protein belongs to the urocanase family. The cofactor is NAD(+).

The protein localises to the cytoplasm. The enzyme catalyses 4-imidazolone-5-propanoate = trans-urocanate + H2O. Its pathway is amino-acid degradation; L-histidine degradation into L-glutamate; N-formimidoyl-L-glutamate from L-histidine: step 2/3. In terms of biological role, catalyzes the conversion of urocanate to 4-imidazolone-5-propionate. The protein is Urocanate hydratase of Xanthomonas campestris pv. campestris (strain ATCC 33913 / DSM 3586 / NCPPB 528 / LMG 568 / P 25).